Reading from the N-terminus, the 419-residue chain is UDP-N-acetylglucosamine 1-carboxyvinyltransferase (419 aa).

22–23 contributes to the phosphoenolpyruvate binding site; sequence KN. Residue R93 coordinates UDP-N-acetyl-alpha-D-glucosamine. The active-site Proton donor is the C117. C117 carries the 2-(S-cysteinyl)pyruvic acid O-phosphothioketal modification. UDP-N-acetyl-alpha-D-glucosamine-binding positions include 122-126, D305, and I327; that span reads RPVDQ.

This sequence belongs to the EPSP synthase family. MurA subfamily.

Its subcellular location is the cytoplasm. The catalysed reaction is phosphoenolpyruvate + UDP-N-acetyl-alpha-D-glucosamine = UDP-N-acetyl-3-O-(1-carboxyvinyl)-alpha-D-glucosamine + phosphate. It functions in the pathway cell wall biogenesis; peptidoglycan biosynthesis. Cell wall formation. Adds enolpyruvyl to UDP-N-acetylglucosamine. In Dichelobacter nodosus (strain VCS1703A), this protein is UDP-N-acetylglucosamine 1-carboxyvinyltransferase.